The chain runs to 264 residues: Ribonuclease HII (264 aa).

The region spanning 33-224 is the RNase H type-2 domain; that stretch reads GPVAGVDEVG…VRRVASGSNT (192 aa). 3 residues coordinate a divalent metal cation: Asp-39, Glu-40, and Asp-133. The tract at residues 222–264 is disordered; the sequence is SNTAEVADGQPDPRDGTAQTGEGRWSKSSHPATMRATGRAQGT.

It belongs to the RNase HII family. The cofactor is Mn(2+). Mg(2+) is required as a cofactor.

The protein resides in the cytoplasm. The enzyme catalyses Endonucleolytic cleavage to 5'-phosphomonoester.. Functionally, endonuclease that specifically degrades the RNA of RNA-DNA hybrids. The protein is Ribonuclease HII of Mycobacterium bovis (strain BCG / Pasteur 1173P2).